Here is a 236-residue protein sequence, read N- to C-terminus: 3-oxoacyl-[acyl-carrier-protein] reductase (236 aa).

Met-1 carries the post-translational modification N-acetylmethionine. Residues 11–14 and 34–35 each bind NADP(+); these read SRGI and RN. At Lys-40 the chain carries N6-acetyllysine. 83 to 85 contributes to the NADP(+) binding site; it reads AAG. An N6-acetyllysine modification is found at Lys-96. Ser-134 serves as a coordination point for substrate. NADP(+) contacts are provided by residues Tyr-147, Lys-151, and 180–182; that span reads IHT. Catalysis depends on Tyr-147, which acts as the Proton acceptor. Lys-194 carries the post-translational modification N6-acetyllysine.

It belongs to the short-chain dehydrogenases/reductases (SDR) family. In terms of assembly, homotetramer (in vitro). Heterotetramer with HSD17B8; contains two molecules each of HSD17B8 and CBR4. Does not form homotetramers when HSD17B8 is coexpressed, only heterotetramers (in vitro).

It is found in the mitochondrion matrix. It carries out the reaction a (3R)-hydroxyacyl-[ACP] + NADP(+) = a 3-oxoacyl-[ACP] + NADPH + H(+). The catalysed reaction is a quinone + NADPH + H(+) = a quinol + NADP(+). It participates in lipid metabolism; fatty acid biosynthesis. Its function is as follows. Component of the heterotetramer complex KAR (3-ketoacyl-[acyl carrier protein] reductase or 3-ketoacyl-[ACP] reductase) that forms part of the mitochondrial fatty acid synthase (mtFAS). Beta-subunit of the KAR heterotetramer complex, responsible for the 3-ketoacyl-ACP reductase activity of the mtFAS, reduces 3-oxoacyl-[ACP] to (3R)-hydroxyacyl-[ACP] in a NADPH-dependent manner with no chain length preference, thereby participating in mitochondrial fatty acid biosynthesis. The homotetramer has NADPH-dependent quinone reductase activity (in vitro), hence could play a role in protection against cytotoxicity of exogenous quinones. As a heterotetramer, it can also reduce 9,10-phenanthrenequinone, 1,4-benzoquinone and various other o-quinones and p-quinones (in vitro). This chain is 3-oxoacyl-[acyl-carrier-protein] reductase (Cbr4), found in Rattus norvegicus (Rat).